The sequence spans 298 residues: Craniofacial development protein 1 (298 aa).

Acidic residues-rich tracts occupy residues methionine 1–tyrosine 18 and tyrosine 25–glutamate 43. 2 disordered regions span residues methionine 1–threonine 159 and lysine 179–methionine 223. A compositionally biased stretch (basic residues) spans lysine 49–glutamine 65. Residues serine 82 and serine 85 each carry the phosphoserine modification. Residues serine 87–serine 102 are compositionally biased toward acidic residues. Residues glutamate 103–glutamate 112 are compositionally biased toward basic and acidic residues. At serine 116 the chain carries Phosphoserine. Positions lysine 124–lysine 134 are enriched in low complexity. Lysine 149 participates in a covalent cross-link: Glycyl lysine isopeptide (Lys-Gly) (interchain with G-Cter in SUMO2). Composition is skewed to basic and acidic residues over residues lysine 149–threonine 159 and lysine 179–proline 200. Positions valine 177–glycine 216 are hydrophilic. Serine 215 is subject to Phosphoserine. Residues leucine 217–proline 298 enclose the BCNT-C domain. N6-methyllysine is present on lysine 218.

It is found in the chromosome. It localises to the centromere. The protein localises to the kinetochore. In terms of biological role, may play a role during embryogenesis. The sequence is that of Craniofacial development protein 1 (CFDP1) from Tragulus javanicus (Lesser Malay chevrotain).